The sequence spans 238 residues: End-binding protein 1 (238 aa).

The Calponin-homology (CH) domain occupies 15–117 (FVGRVSLLKW…FFQWFKWFFD (103 aa)). An interaction with aurora kinase region spans residues 101 to 238 (KYMDNFEFFQ…EDILYAEYHQ (138 aa)). Residues 124–165 (KSGATESGSANAVTKTSKPGNRSGSTAASMQNPKASSTSGPS) show a composition bias toward polar residues. The tract at residues 124–169 (KSGATESGSANAVTKTSKPGNRSGSTAASMQNPKASSTSGPSIDSK) is disordered. Ser148 is subject to Phosphoserine. Residues 156 to 238 (PKASSTSGPS…EDILYAEYHQ (83 aa)) form the EB1 C-terminal domain.

This sequence belongs to the MAPRE family. Homodimer; disulfide-linked and via interaction of the C-terminal EB1-specific domains. Interacts with BOP1 (via C-terminal WD repeats). Interacts with giardin subunit gamma, neurogenic locus notch homolog protein, GL50803_8358 and GL50803_11327. Interacts (via C-terminal residues 101-238) with aurora kinase. Interacts with tubulin gamma chain. In terms of processing, phosphorylated in vitro by aurora kinase. Phosphorylation is important for cell division.

The protein localises to the nucleus membrane. Its subcellular location is the cytoplasm. It localises to the cytoskeleton. The protein resides in the spindle. It is found in the nucleus envelope. The protein localises to the flagellum axoneme. Its subcellular location is the cell projection. It localises to the cilium. The protein resides in the flagellum. In terms of biological role, involved in cell division. Involved in mitosis. Regulates dynamics of microtubules (MTs) during mitosis. Required for cytokinesis. Binds polymerized MTs in vitro. Is able to rescue a mitotic division defect, the proper positioning of the nucleus, of the S.cerevisiae BIM1 knockout mutant in a complementation assay. May play a role in spindle positioning and MT distribution. May be involved in MT nucleation for the formation of median bodies and in the biogenesis of flagella. Based on its localization to both the flagellar exit point and the distal flagellar tips, it may mediate the transition from anterograde to retrograde intraflagellar transport (IFT). This is End-binding protein 1 from Giardia intestinalis (strain ATCC 50803 / WB clone C6) (Giardia lamblia).